The chain runs to 415 residues: Alpha-N-acetylgalactosaminidase (415 aa).

The signal sequence occupies residues 1–17 (MLQKTVLLLALVAQVLM). 3 disulfides stabilise this stretch: Cys-38–Cys-80, Cys-42–Cys-49, and Cys-127–Cys-158. Residues 78–79 (DD) and Lys-154 contribute to the substrate site. Asp-156 functions as the Nucleophile in the catalytic mechanism. The N-linked (GlcNAc...) asparagine glycan is linked to Asn-177. Residues Cys-187 and Cys-209 are joined by a disulfide bond. Ser-188 provides a ligand contact to substrate. Asn-201 is a glycosylation site (N-linked (GlcNAc...) asparagine). Arg-213 and Asp-217 together coordinate substrate. Asp-217 (proton donor) is an active-site residue. Phosphoserine occurs at positions 322 and 332. Asn-385 carries N-linked (GlcNAc...) asparagine glycosylation.

The protein belongs to the glycosyl hydrolase 27 family. As to quaternary structure, homodimer.

The protein localises to the lysosome. It catalyses the reaction Cleavage of non-reducing alpha-(1-&gt;3)-N-acetylgalactosamine residues from human blood group A and AB mucin glycoproteins, Forssman hapten and blood group A lacto series glycolipids.. The enzyme catalyses a neolactoside IV(3)-alpha-GalNAc,IV(2)-alpha-Fuc-nLc4Cer(d18:1(4E)) + H2O = a neolactoside IV(2)-alpha-Fuc-nLc4Cer(d18:1(4E)) + N-acetyl-alpha-D-galactosamine. It carries out the reaction a neolactoside IV(3)-alpha-GalNAc,IV(2)-alpha-Fuc-nLc4Cer(d18:0) + H2O = a neolactoside IV(2)-alpha-Fuc-nLc4Cer(d18:0) + N-acetyl-alpha-D-galactosamine. The catalysed reaction is a globoside IV3GalNAc-Gb4Cer + H2O = N-acetyl-alpha-D-galactosamine + a globoside Gb4Cer. Functionally, removes terminal alpha-N-acetylgalactosamine residues from glycolipids and glycopeptides. Required for the breakdown of glycolipids. This is Alpha-N-acetylgalactosaminidase (Naga) from Mus musculus (Mouse).